Consider the following 216-residue polypeptide: Octanoyltransferase (216 aa).

Positions 35-213 (NSNPDFIWIG…TIEEEFNFDF (179 aa)) constitute a BPL/LPL catalytic domain. Substrate contacts are provided by residues 77–84 (RGGEVTCH), 144–146 (SIG), and 157–159 (GFS). The active-site Acyl-thioester intermediate is the Cys-175.

It belongs to the LipB family.

The protein localises to the cytoplasm. It catalyses the reaction octanoyl-[ACP] + L-lysyl-[protein] = N(6)-octanoyl-L-lysyl-[protein] + holo-[ACP] + H(+). It functions in the pathway protein modification; protein lipoylation via endogenous pathway; protein N(6)-(lipoyl)lysine from octanoyl-[acyl-carrier-protein]: step 1/2. In terms of biological role, catalyzes the transfer of endogenously produced octanoic acid from octanoyl-acyl-carrier-protein onto the lipoyl domains of lipoate-dependent enzymes. Lipoyl-ACP can also act as a substrate although octanoyl-ACP is likely to be the physiological substrate. In Prochlorococcus marinus (strain MIT 9301), this protein is Octanoyltransferase.